A 348-amino-acid polypeptide reads, in one-letter code: Rhodopsin (348 aa).

M1 is subject to N-acetylmethionine. The Extracellular segment spans residues 1–36 (MNGTEGLNFYVPFSNKTGVVRSPFEYPQYYLAEPWQ). 2 N-linked (GlcNAc...) asparagine glycosylation sites follow: N2 and N15. A helical membrane pass occupies residues 37-61 (FSVLAAYMFLLIVLGFPINFLTLYV). The Cytoplasmic portion of the chain corresponds to 62–73 (TVQHKKLRTPLN). A helical membrane pass occupies residues 74 to 96 (YIPLNLAVANLFMVFGGFTTTLY). At 97–110 (TSLHAYFVFGPTGC) the chain is on the extracellular side. C110 and C187 are oxidised to a cystine. The helical transmembrane segment at 111–133 (NLEGFFATLGGEIALWSLVVLAI) threads the bilayer. A 'Ionic lock' involved in activated form stabilization motif is present at residues 134-136 (ERY). At 134 to 152 (ERYVVVCKPMSNFRFGENH) the chain is on the cytoplasmic side. A helical transmembrane segment spans residues 153–173 (AIMGLALTWVMAMACAAPPLV). Over 174-202 (GWSRYIPEGMQCSCGIDYYTSRQEVNNES) the chain is Extracellular. Position 201 (E201) interacts with Zn(2+). The helical transmembrane segment at 203–224 (FVIYMFVVHFTIPLVIIFFCYG) threads the bilayer. At 225-252 (QLVFTVKEAAAQQQESATTQKAEKEVTR) the chain is on the cytoplasmic side. The chain crosses the membrane as a helical span at residues 253–274 (MVIIMVVAFLICWVPYASVAFY). Residues 275–286 (IFTHQGSDFGPI) are Extracellular-facing. Position 279 (Q279) interacts with Zn(2+). A helical transmembrane segment spans residues 287–308 (FMTIPSFFAKSSSIYNPVIYIM). K296 is subject to N6-(retinylidene)lysine. Over 309–348 (MNKQLRNCMLTTLCCGRNPLGDDEASTTASKTETSQVAPA) the chain is Cytoplasmic. Residues C322 and C323 are each lipidated (S-palmitoyl cysteine). The segment at 330-348 (DDEASTTASKTETSQVAPA) is interaction with SAG. The residue at position 334 (S334) is a Phosphoserine. Phosphothreonine is present on residues T335 and T336. S338 carries the post-translational modification Phosphoserine. A phosphothreonine mark is found at T340 and T342. Residue S343 is modified to Phosphoserine.

It belongs to the G-protein coupled receptor 1 family. Opsin subfamily. Homodimer. May form a complex composed of RHO, GRK1 and RCVRN in a Ca(2+)-dependent manner; RCVRN prevents the interaction between GRK1 and RHO. Interacts with GRK1. Interacts (phosphorylated form) with SAG. Interacts with GNAT1. Interacts with GNAT3. SAG and G-proteins compete for a common binding site. Interacts with PRCD; the interaction promotes PRCD stability. Forms a complex with ASAP1 and ARF4. Forms a complex with ASAP1, RAB11A, Rabin8/RAB3IP, ARF4 and RAB11FIP3; the complex regulates Golgi-to-cilia rhodopsin/RHO transport in photoreceptors. Phosphorylated on some or all of the serine and threonine residues present in the C-terminal region. In terms of processing, contains one covalently linked retinal chromophore. Upon light absorption, the covalently bound 11-cis-retinal is converted to all-trans-retinal. After hydrolysis of the Schiff base and release of the covalently bound all-trans-retinal, active rhodopsin is regenerated by binding of a fresh molecule of 11-cis-retinal.

Its subcellular location is the membrane. It localises to the cell projection. The protein resides in the cilium. The protein localises to the photoreceptor outer segment. Photoreceptor required for image-forming vision at low light intensity. Required for photoreceptor cell viability after birth. Light-induced isomerization of 11-cis to all-trans retinal triggers a conformational change that activates signaling via G-proteins. Subsequent receptor phosphorylation mediates displacement of the bound G-protein alpha subunit by the arrestin SAG and terminates signaling. This is Rhodopsin (RHO) from Globicephala melas (Long-finned pilot whale).